A 65-amino-acid polypeptide reads, in one-letter code: Conotoxin Am6.4 (65 aa).

The interval 1 to 33 (STGKRNAGKLTVTDDVEADRDTDPDDKDPSVHN) is disordered. Residues 1–36 (STGKRNAGKLTVTDDVEADRDTDPDDKDPSVHNSWR) constitute a propeptide that is removed on maturation. Positions 14 to 26 (DDVEADRDTDPDD) are enriched in acidic residues. Cystine bridges form between C40/C50, C45/C59, and C49/C64.

Post-translationally, is not hydroxylated. In terms of tissue distribution, expressed by the venom duct.

It is found in the secreted. Functionally, probable toxin that inhibits ion channels. The protein is Conotoxin Am6.4 of Conus amadis (Amadis cone).